Reading from the N-terminus, the 133-residue chain is UPF0102 protein AB57_1130 (133 aa).

It belongs to the UPF0102 family.

In Acinetobacter baumannii (strain AB0057), this protein is UPF0102 protein AB57_1130.